A 412-amino-acid polypeptide reads, in one-letter code: Multifunctional CCA protein (412 aa).

2 residues coordinate ATP: glycine 8 and arginine 11. Glycine 8 and arginine 11 together coordinate CTP. The Mg(2+) site is built by aspartate 21 and aspartate 23. Residues arginine 91, arginine 137, and arginine 140 each contribute to the ATP site. Positions 91, 137, and 140 each coordinate CTP. Positions threonine 228–tryptophan 329 constitute an HD domain.

This sequence belongs to the tRNA nucleotidyltransferase/poly(A) polymerase family. Bacterial CCA-adding enzyme type 1 subfamily. As to quaternary structure, monomer. Can also form homodimers and oligomers. The cofactor is Mg(2+). Requires Ni(2+) as cofactor.

It catalyses the reaction a tRNA precursor + 2 CTP + ATP = a tRNA with a 3' CCA end + 3 diphosphate. The enzyme catalyses a tRNA with a 3' CCA end + 2 CTP + ATP = a tRNA with a 3' CCACCA end + 3 diphosphate. In terms of biological role, catalyzes the addition and repair of the essential 3'-terminal CCA sequence in tRNAs without using a nucleic acid template. Adds these three nucleotides in the order of C, C, and A to the tRNA nucleotide-73, using CTP and ATP as substrates and producing inorganic pyrophosphate. tRNA 3'-terminal CCA addition is required both for tRNA processing and repair. Also involved in tRNA surveillance by mediating tandem CCA addition to generate a CCACCA at the 3' terminus of unstable tRNAs. While stable tRNAs receive only 3'-terminal CCA, unstable tRNAs are marked with CCACCA and rapidly degraded. The sequence is that of Multifunctional CCA protein from Escherichia coli O127:H6 (strain E2348/69 / EPEC).